Reading from the N-terminus, the 277-residue chain is 3-methyl-2-oxobutanoate hydroxymethyltransferase (277 aa).

Residues D43 and D82 each contribute to the Mg(2+) site. Residues 43–44, D82, and K112 contribute to the 3-methyl-2-oxobutanoate site; that span reads DS. E114 serves as a coordination point for Mg(2+). Catalysis depends on E181, which acts as the Proton acceptor.

It belongs to the PanB family. Homodecamer; pentamer of dimers. Mg(2+) is required as a cofactor.

It is found in the cytoplasm. It carries out the reaction 3-methyl-2-oxobutanoate + (6R)-5,10-methylene-5,6,7,8-tetrahydrofolate + H2O = 2-dehydropantoate + (6S)-5,6,7,8-tetrahydrofolate. It functions in the pathway cofactor biosynthesis; (R)-pantothenate biosynthesis; (R)-pantoate from 3-methyl-2-oxobutanoate: step 1/2. Functionally, catalyzes the reversible reaction in which hydroxymethyl group from 5,10-methylenetetrahydrofolate is transferred onto alpha-ketoisovalerate to form ketopantoate. The polypeptide is 3-methyl-2-oxobutanoate hydroxymethyltransferase (Bacillus velezensis (strain DSM 23117 / BGSC 10A6 / LMG 26770 / FZB42) (Bacillus amyloliquefaciens subsp. plantarum)).